The chain runs to 540 residues: Putative rhamnogalacturonase (540 aa).

Positions 1 to 23 (MGFLTLFHMAFLAVSLFVSGALA) are cleaved as a signal peptide. 2 disulfides stabilise this stretch: C53-C100 and C192-C203. N89 carries an N-linked (GlcNAc...) asparagine glycan. N368 carries an N-linked (GlcNAc...) asparagine glycan.

Belongs to the polysaccharide lyase 4 family.

It is found in the secreted. The catalysed reaction is Endotype eliminative cleavage of L-alpha-rhamnopyranosyl-(1-&gt;4)-alpha-D-galactopyranosyluronic acid bonds of rhamnogalacturonan I domains in ramified hairy regions of pectin leaving L-rhamnopyranose at the reducing end and 4-deoxy-4,5-unsaturated D-galactopyranosyluronic acid at the non-reducing end.. In terms of biological role, could be a pectinolytic enzyme that hydrolyzes the alpha-L-rhamnopyranosyl-(1,4)-alpha-D-galacturonopyranosyl glycosidic linkage by beta-elimination, thereby generating oligosaccharides terminating at the non-reducing end with a hex-4-enopyranosyluronic acid residue. This chain is Putative rhamnogalacturonase (asd-1), found in Neurospora crassa (strain ATCC 24698 / 74-OR23-1A / CBS 708.71 / DSM 1257 / FGSC 987).